The primary structure comprises 188 residues: Dual specificity protein phosphatase 18 (188 aa).

Positions 19-160 (GLSQITKSLF…LIHYELQLFG (142 aa)) constitute a Tyrosine-protein phosphatase domain. The tract at residues 95–141 (MQKGRTLLHCAAGVSRSAALCLAYLMKYHAMSLVDAHTWTKSCRPII) is sufficient for mitochondrial localization. Catalysis depends on cysteine 104, which acts as the Phosphocysteine intermediate.

This sequence belongs to the protein-tyrosine phosphatase family. Non-receptor class dual specificity subfamily.

The protein resides in the cytoplasm. The protein localises to the nucleus. It is found in the mitochondrion inner membrane. It carries out the reaction O-phospho-L-tyrosyl-[protein] + H2O = L-tyrosyl-[protein] + phosphate. It catalyses the reaction O-phospho-L-seryl-[protein] + H2O = L-seryl-[protein] + phosphate. The catalysed reaction is O-phospho-L-threonyl-[protein] + H2O = L-threonyl-[protein] + phosphate. Can dephosphorylate single and diphosphorylated synthetic MAPK peptides, with preference for the phosphotyrosine and diphosphorylated forms over phosphothreonine. In vitro, dephosphorylates p-nitrophenyl phosphate (pNPP). In Mus musculus (Mouse), this protein is Dual specificity protein phosphatase 18 (Dusp18).